The sequence spans 499 residues: Leukocyte immunoglobulin-like receptor subfamily A member 4 (499 aa).

Positions 1-23 (MTLILTSLLFFGLSLGPRTRVQA) are cleaved as a signal peptide. 4 Ig-like C2-type domains span residues 24 to 118 (ENLL…LVVT), 123 to 213 (PTLS…SDPL), 224 to 313 (PSLL…DPLD), and 324 to 413 (PSLS…SEPL). At 24–446 (ENLLKPILWA…PHLQDYTVEN (423 aa)) the chain is on the extracellular side. Residues Cys49 and Cys98 are joined by a disulfide bond. An N-linked (GlcNAc...) asparagine glycan is attached at Asn138. Cys143 and Cys195 are disulfide-bonded. N-linked (GlcNAc...) asparagine glycans are attached at residues Asn239, Asn279, and Asn300. Cys244 and Cys295 are oxidised to a cystine. A disulfide bond links Cys344 and Cys395. The residue at position 404 (Tyr404) is a 3'-nitrotyrosine. A helical transmembrane segment spans residues 447–467 (LIRMGVAGLVLLFLGILLFEA). The Cytoplasmic portion of the chain corresponds to 468-499 (QHSQRSPPRCSQEANSRKDNAPFRVVEPWEQI).

As to quaternary structure, interacts with FCER1G; this stabilizes the expression of both proteins at the cell membrane. Interacts with BST2; leads to activation of LILRA4-mediated signaling and down-regulation of the innate immune response to viral pathogens. As to expression, detected on plasmacytoid dendritic cells (at protein level). Detected on plasmacytoid dendritic cells, but not on monocytes or B cells.

Its subcellular location is the cell membrane. Its function is as follows. Functions coreceptor to limit the innate immune responses to viral infections; signaling occurs via FCER1G. Down-regulates the production of IFNA1, IFNA2, IFNA4, IFNB1 and TNF by plasmacytoid dendritic cells that have been exposed to influenza virus or cytidine-phosphate-guanosine (CpG) dinucleotides, indicating it functions as a negative regulator of TLR7 and TLR9 signaling cascades. Down-regulates interferon production in response to interaction with BST2 on HIV-1 infected cells. Activates a signaling cascade in complex with FCER1G that results in phosphorylation of Src family and Syk kinases and thereby triggers mobilization of intracellular Ca(2+). Does not interfere with the differentiation of plasmacytoid dendritic cells into antigen-presenting cells. The sequence is that of Leukocyte immunoglobulin-like receptor subfamily A member 4 from Homo sapiens (Human).